We begin with the raw amino-acid sequence, 239 residues long: 7-cyano-7-deazaguanine synthase (239 aa).

Residue 13–23 participates in ATP binding; sequence FSGGQDSTTCL. Residues Cys192, Cys201, Cys204, and Cys207 each coordinate Zn(2+).

It belongs to the QueC family. Requires Zn(2+) as cofactor.

The catalysed reaction is 7-carboxy-7-deazaguanine + NH4(+) + ATP = 7-cyano-7-deazaguanine + ADP + phosphate + H2O + H(+). Its pathway is purine metabolism; 7-cyano-7-deazaguanine biosynthesis. Its function is as follows. Catalyzes the ATP-dependent conversion of 7-carboxy-7-deazaguanine (CDG) to 7-cyano-7-deazaguanine (preQ(0)). The sequence is that of 7-cyano-7-deazaguanine synthase from Shewanella sp. (strain MR-4).